Here is a 170-residue protein sequence, read N- to C-terminus: Probable calcium-binding protein CML29 (170 aa).

EF-hand domains are found at residues 27-62 (SYIS…LGLD), 63-98 (KPEH…GQLG), and 138-170 (ASVE…AQLL). Residues Asp-40, Asp-42, Asp-44, Glu-51, Asp-76, Asp-78, Asp-80, Lys-82, Glu-87, Asp-151, Asp-153, Asp-155, and Glu-162 each coordinate Ca(2+).

Functionally, potential calcium sensor. The polypeptide is Probable calcium-binding protein CML29 (CML29) (Oryza sativa subsp. japonica (Rice)).